The following is a 359-amino-acid chain: Phospho-N-acetylmuramoyl-pentapeptide-transferase (359 aa).

The next 10 helical transmembrane spans lie at Q3–I23, V55–L75, G84–I104, T120–A140, I156–A176, L187–F207, L231–A251, I255–T275, I280–I300, and F334–L354.

This sequence belongs to the glycosyltransferase 4 family. MraY subfamily. Mg(2+) serves as cofactor.

Its subcellular location is the cell membrane. It catalyses the reaction UDP-N-acetyl-alpha-D-muramoyl-L-alanyl-gamma-D-glutamyl-meso-2,6-diaminopimeloyl-D-alanyl-D-alanine + di-trans,octa-cis-undecaprenyl phosphate = di-trans,octa-cis-undecaprenyl diphospho-N-acetyl-alpha-D-muramoyl-L-alanyl-D-glutamyl-meso-2,6-diaminopimeloyl-D-alanyl-D-alanine + UMP. The protein operates within cell wall biogenesis; peptidoglycan biosynthesis. Functionally, catalyzes the initial step of the lipid cycle reactions in the biosynthesis of the cell wall peptidoglycan: transfers peptidoglycan precursor phospho-MurNAc-pentapeptide from UDP-MurNAc-pentapeptide onto the lipid carrier undecaprenyl phosphate, yielding undecaprenyl-pyrophosphoryl-MurNAc-pentapeptide, known as lipid I. The polypeptide is Phospho-N-acetylmuramoyl-pentapeptide-transferase (Mycobacterium sp. (strain JLS)).